A 383-amino-acid polypeptide reads, in one-letter code: MHSLDTYAADKIERLEAASLLRRLKPTQRSAGVVVERDGRKLLSFSCNDYLGLAHHPKVKAAAQAAIETYGAGSGASRLVTGDHPLLSELEARLARLKGAEACVVFGSGYLANTGLIPTFAGKGDIVLLDELAHACIWAGAQLSGARIIPFAHNDTDHLAALLAEHRSSARHAIVATDGVFSMDGDIAPLDWLSAVCEANDAWLLSDDAHGVGVLAQGKGSAALFPEAQIPFQMGTLSKALGSYGGYVCASQAVVDLLKTRARTLVYSTGLPPAAAAAALAALDIVEAEPALTALPLAKARAFTQAVGLPPAASPIVPVIIGEAQDALDASRALEAEGFLVVAIRPPTVPAGAARLRIAFSAEHPDAEIARLAELVRPYVKAR.

A substrate-binding site is contributed by arginine 22. Residue 109–110 coordinates pyridoxal 5'-phosphate; the sequence is GY. Substrate is bound at residue histidine 134. Pyridoxal 5'-phosphate is bound by residues serine 182, 207-210, and 236-239; these read DDAH and TLSK. At lysine 239 the chain carries N6-(pyridoxal phosphate)lysine. Threonine 348 is a substrate binding site.

This sequence belongs to the class-II pyridoxal-phosphate-dependent aminotransferase family. BioF subfamily. As to quaternary structure, homodimer. The cofactor is pyridoxal 5'-phosphate.

It carries out the reaction 6-carboxyhexanoyl-[ACP] + L-alanine + H(+) = (8S)-8-amino-7-oxononanoate + holo-[ACP] + CO2. It functions in the pathway cofactor biosynthesis; biotin biosynthesis. Its function is as follows. Catalyzes the decarboxylative condensation of pimeloyl-[acyl-carrier protein] and L-alanine to produce 8-amino-7-oxononanoate (AON), [acyl-carrier protein], and carbon dioxide. The polypeptide is Putative 8-amino-7-oxononanoate synthase (bioF) (Caulobacter sp. (strain K31)).